Here is an 89-residue protein sequence, read N- to C-terminus: DNA-binding protein HU (89 aa).

This sequence belongs to the bacterial histone-like protein family. As to quaternary structure, homodimer. The dimer interacts with the DNA mimic protein DMP12. It also interacts with the monomeric form of the DNA mimic protein DMP19 with 1:1 stoichiometry.

Activity is regulated by the DNA mimic protein DMP12. Activity is inhibited in the presence of the DNA mimic protein DMP19, which interacts with HU and prevents the binding of HU to DNA. Histone-like DNA-binding protein which is capable of wrapping DNA to stabilize it, and thus to prevent its denaturation under extreme environmental conditions. This Neisseria meningitidis serogroup B (strain ATCC BAA-335 / MC58) protein is DNA-binding protein HU.